The primary structure comprises 82 residues: MDLSNRTVVQVVVLALVAQVTLSQHWSYGWLPGGKRSVGELEATIKMMDTGGVVALPEETSAHFSERLRPYDVILKKWMPHK.

An N-terminal signal peptide occupies residues 1 to 23 (MDLSNRTVVQVVVLALVAQVTLS). Position 24 is a pyrrolidone carboxylic acid (Q24). G33 is modified (glycine amide).

This sequence belongs to the GnRH family.

The protein localises to the secreted. Stimulates the secretion of gonadotropins. This chain is Progonadoliberin-3 (gnrh3), found in Salmo trutta (Brown trout).